Reading from the N-terminus, the 721-residue chain is Quinolinate synthase, chloroplastic (721 aa).

The N-terminal 67 residues, 1 to 67, are a transit peptide targeting the chloroplast; the sequence is MDAANLVMKS…KIPSNNSTFT (67 aa). The Cysteine persulfide intermediate role is filled by cysteine 133. Iminosuccinate contacts are provided by histidine 283 and serine 309. Cysteine 363 contacts [4Fe-4S] cluster. Residues 392–394 and serine 414 each bind iminosuccinate; that span reads YIN. Residue cysteine 487 coordinates [4Fe-4S] cluster. Residues 513–515 and threonine 538 each bind iminosuccinate; that span reads HFE. Residue cysteine 643 coordinates [4Fe-4S] cluster.

Belongs to the quinolinate synthase family. Type 1 subfamily. Homodimer. It depends on [4Fe-4S] cluster as a cofactor.

The protein resides in the plastid. Its subcellular location is the chloroplast. The enzyme catalyses iminosuccinate + dihydroxyacetone phosphate = quinolinate + phosphate + 2 H2O + H(+). It functions in the pathway alkaloid biosynthesis; nicotine biosynthesis. Its pathway is cofactor biosynthesis; NAD(+) biosynthesis; quinolinate from iminoaspartate: step 1/1. Involved in the biosynthesis of pyridine alkaloid natural products, leading mainly to the production of anabasine, anatabine, nicotine and nornicotine, effective deterrents against herbivores with antiparasitic and pesticide properties (neurotoxins); nornicotine serves as the precursor in the synthesis of the carcinogen compound N'-nitrosonornicotine (NNN). Catalyzes the condensation of iminoaspartate with dihydroxyacetone phosphate to form quinolinate. The chain is Quinolinate synthase, chloroplastic from Nicotiana tabacum (Common tobacco).